The primary structure comprises 443 residues: Exodeoxyribonuclease 7 large subunit (443 aa).

Belongs to the XseA family. In terms of assembly, heterooligomer composed of large and small subunits.

The protein resides in the cytoplasm. It carries out the reaction Exonucleolytic cleavage in either 5'- to 3'- or 3'- to 5'-direction to yield nucleoside 5'-phosphates.. Bidirectionally degrades single-stranded DNA into large acid-insoluble oligonucleotides, which are then degraded further into small acid-soluble oligonucleotides. This chain is Exodeoxyribonuclease 7 large subunit, found in Legionella pneumophila (strain Lens).